The sequence spans 277 residues: MARSDVLVSADWAESNLDSANIVFVEVDEDTSTYDGDHIAGAIKLDWRADLQDPIKRDFIDTQQFSKLLGDRGISNDNTVILYGGNNNWFAAYAYWYFKLYRHDKVKLLDGGRKKWELDGRPLSTDTVTRPATSYAAAAPDNTIRAFRDEVIASIKIKNLVDVRSPDEFSGKLLAPAHLPQEQSQRPGHIPSAINIPWSKAANEDGTFKSDEQLAKLYADAGLDRLKETIVYCRIGERSSHTWFVLRELLGYQNVKNYDGSWTEYGSLVGVPIELGS.

Rhodanese domains are found at residues 18 to 125 and 154 to 274; these read DSAN…PLST and SIKI…VPIE. Residue C233 is the Cysteine persulfide intermediate of the active site. R238 provides a ligand contact to substrate.

It carries out the reaction thiosulfate + hydrogen cyanide = thiocyanate + sulfite + 2 H(+). May be a sulfotransferase involved in the formation of thiosulfate. The sequence is that of Putative thiosulfate sulfurtransferase (cysA) from Mycobacterium leprae (strain TN).